A 359-amino-acid chain; its full sequence is MEKKKIAVLFGGQSGEHEVSLMSAKSIINNLDKDKYEIYMVGITKKGEWYLYRGDVGKIETGEWEKEGIPAIMGASTKYRGIITFEDGENGFYPIDVVFPVLHGPNGEDGTIQGLLELLDMPYVGANVLSSALCMDKVFTKRIFKEAGLPTPDFVVVYGKEIEDLEAIKKKIEHLGYPCFVKPANLGSSVGITKVHNEEELPGALKLAAKYDRKLLIERGIDAREIECSVLGNENPEASIAGEIVPSNEFYDYNAKYFDGGKSLLLIPAPLPDEKMEEVRKLAIKAYKALDLRGMARVDFLMDRNTGTLYLNEVNTIPGFTKISMYPKLWESSGKSYSTLLDELINLAVESHNEKCREW.

The region spanning 141–346 is the ATP-grasp domain; that stretch reads KRIFKEAGLP…YSTLLDELIN (206 aa). 172 to 227 provides a ligand contact to ATP; it reads IEHLGYPCFVKPANLGSSVGITKVHNEEELPGALKLAAKYDRKLLIERGIDAREIE. Mg(2+) is bound by residues D299, E313, and N315.

The protein belongs to the D-alanine--D-alanine ligase family. Mg(2+) is required as a cofactor. Requires Mn(2+) as cofactor.

The protein resides in the cytoplasm. The enzyme catalyses 2 D-alanine + ATP = D-alanyl-D-alanine + ADP + phosphate + H(+). It functions in the pathway cell wall biogenesis; peptidoglycan biosynthesis. In terms of biological role, cell wall formation. The sequence is that of D-alanine--D-alanine ligase from Thermoanaerobacter pseudethanolicus (strain ATCC 33223 / 39E) (Clostridium thermohydrosulfuricum).